A 473-amino-acid chain; its full sequence is UDP-glycosyltransferase 71B1 (473 aa).

H15 serves as the catalytic Proton acceptor. An an anthocyanidin-binding site is contributed by H15. The active-site Charge relay is D110. UDP-alpha-D-glucose-binding residues include T132, A342, Q344, H359, W362, N363, S364, and E367. A382 is a binding site for an anthocyanidin. UDP-alpha-D-glucose-binding residues include E383 and Q384.

Belongs to the UDP-glycosyltransferase family.

It carries out the reaction a flavonol + UDP-alpha-D-glucose = a flavonol 3-O-beta-D-glucoside + UDP + H(+). Functionally, possesses quercetin 3-O-glucosyltransferase activity in vitro. Also active in vitro on benzoates and benzoate derivatives. This chain is UDP-glycosyltransferase 71B1 (UGT71B1), found in Arabidopsis thaliana (Mouse-ear cress).